A 1099-amino-acid chain; its full sequence is ATP-dependent helicase/deoxyribonuclease subunit B (1099 aa).

Residues cysteine 766, cysteine 1056, cysteine 1059, and cysteine 1065 each contribute to the [4Fe-4S] cluster site.

This sequence belongs to the helicase family. AddB/RexB type 2 subfamily. Heterodimer of AddA and RexB. Mg(2+) is required as a cofactor. [4Fe-4S] cluster serves as cofactor.

In terms of biological role, the heterodimer acts as both an ATP-dependent DNA helicase and an ATP-dependent, dual-direction single-stranded exonuclease. Recognizes the chi site generating a DNA molecule suitable for the initiation of homologous recombination. This subunit has 5' -&gt; 3' nuclease activity but not helicase activity. The protein is ATP-dependent helicase/deoxyribonuclease subunit B of Lactococcus lactis subsp. lactis (strain IL1403) (Streptococcus lactis).